A 367-amino-acid chain; its full sequence is Chorismate synthase (367 aa).

Arg48 is an NADP(+) binding site. Residues 125 to 127, Gly284, 299 to 303, and Arg325 each bind FMN; these read RSS and KPTPS.

It belongs to the chorismate synthase family. Homotetramer. FMNH2 is required as a cofactor.

The enzyme catalyses 5-O-(1-carboxyvinyl)-3-phosphoshikimate = chorismate + phosphate. The protein operates within metabolic intermediate biosynthesis; chorismate biosynthesis; chorismate from D-erythrose 4-phosphate and phosphoenolpyruvate: step 7/7. Functionally, catalyzes the anti-1,4-elimination of the C-3 phosphate and the C-6 proR hydrogen from 5-enolpyruvylshikimate-3-phosphate (EPSP) to yield chorismate, which is the branch point compound that serves as the starting substrate for the three terminal pathways of aromatic amino acid biosynthesis. This reaction introduces a second double bond into the aromatic ring system. This is Chorismate synthase from Lachnoclostridium phytofermentans (strain ATCC 700394 / DSM 18823 / ISDg) (Clostridium phytofermentans).